The primary structure comprises 99 residues: Large ribosomal subunit protein uL23 (99 aa).

In terms of assembly, contacts protein L29, and trigger factor when it is bound to the ribosome. Part of the 50S ribosomal subunit.

Its function is as follows. One of the early assembly proteins it binds 23S rRNA. One of the proteins that surrounds the polypeptide exit tunnel on the outside of the ribosome. Forms the main docking site for trigger factor binding to the ribosome. This is Large ribosomal subunit protein uL23 from Rhodopseudomonas palustris (strain ATCC BAA-98 / CGA009).